We begin with the raw amino-acid sequence, 60 residues long: Large ribosomal subunit protein uL30 (60 aa).

The protein belongs to the universal ribosomal protein uL30 family. As to quaternary structure, part of the 50S ribosomal subunit.

The sequence is that of Large ribosomal subunit protein uL30 from Shewanella woodyi (strain ATCC 51908 / MS32).